We begin with the raw amino-acid sequence, 133 residues long: MKTNHPETYDGRQDHIPSLKTPEIESFTNVYEGKDYTIDFTVPEFTAVCPKTGLPDFGVIYVSYVPTKRCIELKSFKEYILSYRNVGVFHEFLVNKIMEDLIAAIDPKYLKVIGDYNARGGIKTVVTREYNKI.

The Thioimide intermediate role is filled by Cys-49. The Proton donor role is filled by Asp-56. Substrate-binding positions include 71–73 (IEL) and 90–91 (HE).

Belongs to the GTP cyclohydrolase I family. QueF type 1 subfamily.

The protein resides in the cytoplasm. It carries out the reaction 7-aminomethyl-7-carbaguanine + 2 NADP(+) = 7-cyano-7-deazaguanine + 2 NADPH + 3 H(+). It participates in tRNA modification; tRNA-queuosine biosynthesis. Catalyzes the NADPH-dependent reduction of 7-cyano-7-deazaguanine (preQ0) to 7-aminomethyl-7-deazaguanine (preQ1). The chain is NADPH-dependent 7-cyano-7-deazaguanine reductase from Leptospira borgpetersenii serovar Hardjo-bovis (strain JB197).